The sequence spans 58 residues: Large ribosomal subunit protein eL37 (58 aa).

Zn(2+) contacts are provided by Cys20, Cys23, Cys35, and Cys38. A C4-type zinc finger spans residues 20–38 (CRRCGEKSYHVKKERCSSC). The tract at residues 39–58 (GFGDSASRRGYAWQSKSGDN) is disordered.

It belongs to the eukaryotic ribosomal protein eL37 family. Zn(2+) is required as a cofactor.

In terms of biological role, binds to the 23S rRNA. The protein is Large ribosomal subunit protein eL37 of Halorubrum lacusprofundi (strain ATCC 49239 / DSM 5036 / JCM 8891 / ACAM 34).